We begin with the raw amino-acid sequence, 325 residues long: DNA-directed RNA polymerase subunit alpha (325 aa).

The tract at residues 1–231 (MQTSLLKPKI…DQLSVFAALE (231 aa)) is alpha N-terminal domain (alpha-NTD). The segment at 246 to 325 (IDPILLRPVD…ENWPPAGLDK (80 aa)) is alpha C-terminal domain (alpha-CTD).

Belongs to the RNA polymerase alpha chain family. In terms of assembly, homodimer. The RNAP catalytic core consists of 2 alpha, 1 beta, 1 beta' and 1 omega subunit. When a sigma factor is associated with the core the holoenzyme is formed, which can initiate transcription.

It carries out the reaction RNA(n) + a ribonucleoside 5'-triphosphate = RNA(n+1) + diphosphate. Functionally, DNA-dependent RNA polymerase catalyzes the transcription of DNA into RNA using the four ribonucleoside triphosphates as substrates. The sequence is that of DNA-directed RNA polymerase subunit alpha from Paraburkholderia phytofirmans (strain DSM 17436 / LMG 22146 / PsJN) (Burkholderia phytofirmans).